Reading from the N-terminus, the 276-residue chain is Ribosomal RNA small subunit methyltransferase A (276 aa).

S-adenosyl-L-methionine is bound by residues Asn-27, Leu-29, Gly-54, Glu-75, Asp-101, and Asn-123.

This sequence belongs to the class I-like SAM-binding methyltransferase superfamily. rRNA adenine N(6)-methyltransferase family. RsmA subfamily.

The protein resides in the cytoplasm. It carries out the reaction adenosine(1518)/adenosine(1519) in 16S rRNA + 4 S-adenosyl-L-methionine = N(6)-dimethyladenosine(1518)/N(6)-dimethyladenosine(1519) in 16S rRNA + 4 S-adenosyl-L-homocysteine + 4 H(+). Specifically dimethylates two adjacent adenosines (A1518 and A1519) in the loop of a conserved hairpin near the 3'-end of 16S rRNA in the 30S particle. May play a critical role in biogenesis of 30S subunits. In Bartonella bacilliformis (strain ATCC 35685 / KC583 / Herrer 020/F12,63), this protein is Ribosomal RNA small subunit methyltransferase A.